Here is a 608-residue protein sequence, read N- to C-terminus: Afamin (608 aa).

A signal peptide spans 1–21 (MRHLKLTGFIFFLLSLTESLA). 3 consecutive Albumin domains span residues 22 to 210 (LPTK…APIT), 211 to 403 (QYLK…KFNE), and 404 to 599 (TTER…KTGD). Asparagine 33 carries an N-linked (GlcNAc...) asparagine glycan. Disulfide bonds link cysteine 77–cysteine 86, cysteine 99–cysteine 114, cysteine 113–cysteine 124, cysteine 148–cysteine 193, cysteine 224–cysteine 270, cysteine 269–cysteine 277, cysteine 289–cysteine 303, cysteine 302–cysteine 313, cysteine 340–cysteine 385, and cysteine 384–cysteine 393. Asparagine 109 carries an N-linked (GlcNAc...) asparagine glycan. An N-linked (GlcNAc...) asparagine glycan is attached at asparagine 153. The binding pocket for hydrophobic ligands stretch occupies residues 215-319 (ALSSYQRNVC…RADCIINANK (105 aa)). Asparagine 402 is a glycosylation site (N-linked (GlcNAc...) asparagine). Intrachain disulfides connect cysteine 416-cysteine 462, cysteine 461-cysteine 470, cysteine 483-cysteine 499, cysteine 498-cysteine 509, and cysteine 580-cysteine 589. The N-linked (GlcNAc...) asparagine glycan is linked to asparagine 488. Residues 585 to 608 (KPEACFSPESSKTGDVSQDAEKQR) are disordered.

Belongs to the ALB/AFP/VDB family. Forms a 1:1 complex with Wnt family members; interacts with WNT1, WNT2B, WNT3, WNT3A, WNT5A, WNT7A, WNT7B, WNT8, WNT9A, WNT9B, WNT10A and WNT10B. In terms of processing, N-glycosylated; more than 90% of the glycans are sialylated.

Its subcellular location is the secreted. Its function is as follows. Functions as a carrier for hydrophobic molecules in body fluids. Essential for the solubility and activity of lipidated Wnt family members, including WNT1, WNT2B, WNT3, WNT3A, WNT5A, WNT7A, WNT7B, WNT8, WNT9A, WNT9B, WNT10A and WNT10B. Binds vitamin E. May transport vitamin E in body fluids under conditions where the lipoprotein system is not sufficient. May be involved in the transport of vitamin E across the blood-brain barrier. The sequence is that of Afamin (Afm) from Rattus norvegicus (Rat).